We begin with the raw amino-acid sequence, 185 residues long: Ribosome-recycling factor (185 aa).

This sequence belongs to the RRF family.

It localises to the cytoplasm. Responsible for the release of ribosomes from messenger RNA at the termination of protein biosynthesis. May increase the efficiency of translation by recycling ribosomes from one round of translation to another. This chain is Ribosome-recycling factor, found in Haemophilus ducreyi (strain 35000HP / ATCC 700724).